A 49-amino-acid polypeptide reads, in one-letter code: MRQKVTLACEQCGSRNYTTTKQMGRLGERLTANKFCSVCNKHTVHRETK.

It belongs to the bacterial ribosomal protein bL33 family.

This is Large ribosomal subunit protein bL33A from Geobacillus thermodenitrificans (strain NG80-2).